A 355-amino-acid polypeptide reads, in one-letter code: Mannonate dehydratase (355 aa).

This sequence belongs to the mannonate dehydratase family. Fe(2+) serves as cofactor. It depends on Mn(2+) as a cofactor.

It catalyses the reaction D-mannonate = 2-dehydro-3-deoxy-D-gluconate + H2O. The protein operates within carbohydrate metabolism; pentose and glucuronate interconversion. Its function is as follows. Catalyzes the dehydration of D-mannonate. The polypeptide is Mannonate dehydratase (Brachyspira hyodysenteriae (strain ATCC 49526 / WA1)).